The primary structure comprises 942 residues: Mitogen-activated protein kinase kinase kinase 14 (942 aa).

Basic residues predominate over residues 136 to 152 (GKRHGKARKKRRKKRSK). Disordered stretches follow at residues 136-156 (GKRH…SLAQ) and 291-326 (VSGQ…SCPS). A Protein kinase domain is found at 402 to 657 (MTHQPRVGRG…ELRRKVGKAL (256 aa)). Positions 403 to 655 (THQPRVGRGS…AMELRRKVGK (253 aa)) are interaction with ZFP91. Residues 408-416 (VGRGSFGEV) and Lys-431 each bind ATP. Asp-517 acts as the Proton acceptor in catalysis. Position 561 is a phosphothreonine (Thr-561). 2 disordered regions span residues 660 to 756 (VGGL…FPDR) and 801 to 823 (SDDS…SSGV). Over residues 707-720 (EPQPPLPPEPPEPS) the composition is skewed to pro residues. The segment covering 809–823 (SKASQSSRDTLSSGV) has biased composition (polar residues).

It belongs to the protein kinase superfamily. STE Ser/Thr protein kinase family. MAP kinase kinase kinase subfamily. Interacts with TRAF2, TRAF3, TRAF5, TRAF6, IKKA and NF-kappa-B2/P100. Interacts with PELI3. Interacts with NIBP; the interaction is direct. Interacts with ARRB1 and ARRB2. Interacts with GRB10. Interacts with ZFP91. Interacts with NLRP12; this interaction promotes proteasomal degradation of MAP3K14. Directly interacts with DDX3X. Interacts (via C-terminus and kinase domain) with PPPC3A (via N-terminus) and PPP3CB. Phosphorylation at Thr-561 is required to activate its kinase activity and 'Lys-63'-linked polyubiquitination. Phosphorylated by CHUK/IKKA leading to MAP3K14 destabilization. Autophosphorylated. Post-translationally, ubiquitinated. Undergoes both 'Lys-48'- and 'Lys-63'-linked polyubiquitination. 'Lys-48'-linked polyubiquitination leads to its degradation by the proteasome, while 'Lys-63'-linked polyubiquitination stabilizes and activates it.

The protein localises to the cytoplasm. The enzyme catalyses L-seryl-[protein] + ATP = O-phospho-L-seryl-[protein] + ADP + H(+). It carries out the reaction L-threonyl-[protein] + ATP = O-phospho-L-threonyl-[protein] + ADP + H(+). Lymphotoxin beta-activated kinase which seems to be exclusively involved in the activation of NF-kappa-B and its transcriptional activity. Phosphorylates CHUK/IKKA. Promotes proteolytic processing of NFKB2/P100, which leads to activation of NF-kappa-B via the non-canonical pathway. Has an essential role in the non-canonical NF-kappa-B signalining that regulates genes encoding molecules involved in B-cell survival, lymphoid organogenesis, and immune response. Could act in a receptor-selective manner. This Mus musculus (Mouse) protein is Mitogen-activated protein kinase kinase kinase 14.